Consider the following 363-residue polypeptide: Protein-arginine kinase (363 aa).

The Phosphagen kinase C-terminal domain occupies 24–255 (IVLSSRIRLA…EQLIAQERAA (232 aa)). Residues 27-31 (SSRIR), H92, R126, 177-181 (RASVM), and 208-213 (RGTYGE) each bind ATP. The RDXXRA motif of the pArg binding pocket involved in allosteric regulation motif lies at 338–343 (RDVRRA).

The protein belongs to the ATP:guanido phosphotransferase family. In terms of assembly, homodimer. Dimerization is important for full catalytic activity.

The enzyme catalyses L-arginyl-[protein] + ATP = N(omega)-phospho-L-arginyl-[protein] + ADP + H(+). Appears to be allosterically activated by the binding of pArg-containing polypeptides to the pArg-binding pocket localized in the C-terminal domain of McsB. Catalyzes the specific phosphorylation of arginine residues in a large number of proteins. Is part of the bacterial stress response system, where it is involved in regulating the global heat shock repressor CtsR; phosphorylates arginine residues in the winged helix-turn-helix domain of CtsR, thereby preventing its binding to DNA and consequently inducing the expression of repressed genes. Protein arginine phosphorylation has a physiologically important role and is involved in the regulation of many critical cellular processes, such as protein homeostasis, motility, competence, and stringent and stress responses, by regulating gene expression and protein activity. Acts exclusively on Arg residues, since it cannot phosphorylate Tyr, Ser, Thr, His, Asp and Lys. Has no free arginine kinase activity. This is Protein-arginine kinase from Geobacillus stearothermophilus (Bacillus stearothermophilus).